Reading from the N-terminus, the 215-residue chain is MSVQVKICGLSTPETIEASVSAGADYLGFVFFSRSPRHLSYELAARLSGYVPASVPKVALTVDADDAMLDAVVEALRPDILQLHGDETPQRLVEIKARYGLTLMKAICVAQPEDPLTAAIYRDSADLLLFDAKPPKSMAGALPGGNGLVFDWSLIAGHRPETPWMLSGGLNAENVAEAVRITGAEAVDVSSGIEEGPGRKTPELIEAFIRAAKRA.

The protein belongs to the TrpF family.

It carries out the reaction N-(5-phospho-beta-D-ribosyl)anthranilate = 1-(2-carboxyphenylamino)-1-deoxy-D-ribulose 5-phosphate. It functions in the pathway amino-acid biosynthesis; L-tryptophan biosynthesis; L-tryptophan from chorismate: step 3/5. The protein is N-(5'-phosphoribosyl)anthranilate isomerase of Parvibaculum lavamentivorans (strain DS-1 / DSM 13023 / NCIMB 13966).